A 279-amino-acid chain; its full sequence is Probable ribosomal RNA small subunit methyltransferase A (279 aa).

Residues Asn23, Leu25, Gly50, Glu71, Asp95, and Asn110 each coordinate S-adenosyl-L-methionine.

Belongs to the class I-like SAM-binding methyltransferase superfamily. rRNA adenine N(6)-methyltransferase family. RsmA subfamily.

The protein localises to the cytoplasm. Functionally, specifically dimethylates two adjacent adenosines in the loop of a conserved hairpin near the 3'-end of 16S rRNA in the 30S particle. May play a critical role in biogenesis of 30S subunits. The sequence is that of Probable ribosomal RNA small subunit methyltransferase A from Thermococcus kodakarensis (strain ATCC BAA-918 / JCM 12380 / KOD1) (Pyrococcus kodakaraensis (strain KOD1)).